The primary structure comprises 825 residues: Zygotic DNA replication licensing factor mcm6-B (825 aa).

The C4-type zinc finger occupies 159-186 (CLDCQTLVRDVEQQFKYTQPSICRNPVC). The MCM domain occupies 347 to 554 (LYHNLCTSLF…TDYAIARRIV (208 aa)). 397–404 (GDPSTAKS) lines the ATP pocket. The Arginine finger signature appears at 529 to 532 (SRFD). Positions 668–679 (DQEDEHEVEEPQ) are enriched in acidic residues. Residues 668–690 (DQEDEHEVEEPQEGINGDADVPN) form a disordered region.

Belongs to the MCM family. In terms of assembly, component of the mcm2-7 complex (RLF-M). The complex forms a toroidal hexameric ring with the proposed subunit order mcm2-mcm6-mcm4-mcm7-mcm3-mcm5 (By simililarity). Begins to associate with zmcm3, mcm4 and mcm7 into mcm complexes at the neurula stage.

It is found in the nucleus. The catalysed reaction is ATP + H2O = ADP + phosphate + H(+). Acts as a component of the mcm2-7 complex (mcm complex) which is the putative replicative helicase essential for 'once per cell cycle' DNA replication initiation and elongation in eukaryotic cells. The active ATPase sites in the mcm2-7 ring are formed through the interaction surfaces of two neighboring subunits such that a critical structure of a conserved arginine finger motif is provided in trans relative to the ATP-binding site of the Walker A box of the adjacent subunit. The six ATPase active sites, however, are likely to contribute differentially to the complex helicase activity. The existence of maternal and zygotic forms of mcm3 and mcm6 suggests that specific forms of mcm2-7 complexes may be used during different stages of development. May replace mmcm6 in the mcm2-7 complex. This is Zygotic DNA replication licensing factor mcm6-B (zmcm6-b) from Xenopus laevis (African clawed frog).